Reading from the N-terminus, the 305-residue chain is Translation initiation factor eIF2B subunit alpha (305 aa).

The protein belongs to the eIF-2B alpha/beta/delta subunits family. In terms of assembly, component of the translation initiation factor 2B (eIF2B) complex which is a heterodecamer of two sets of five different subunits: alpha, beta, gamma, delta and epsilon. Subunits alpha, beta and delta comprise a regulatory subcomplex and subunits epsilon and gamma comprise a catalytic subcomplex. Within the complex, the hexameric regulatory complex resides at the center, with the two heterodimeric catalytic subcomplexes bound on opposite sides.

The protein localises to the cytoplasm. It localises to the cytosol. With respect to regulation, activated by the chemical integrated stress response (ISR) inhibitor ISRIB which stimulates guanine nucleotide exchange factor activity for both phosphorylated and unphosphorylated eIF2. In terms of biological role, acts as a component of the translation initiation factor 2B (eIF2B) complex, which catalyzes the exchange of GDP for GTP on eukaryotic initiation factor 2 (eIF2) gamma subunit. Its guanine nucleotide exchange factor activity is repressed when bound to eIF2 complex phosphorylated on the alpha subunit, thereby limiting the amount of methionyl-initiator methionine tRNA available to the ribosome and consequently global translation is repressed. In Bos taurus (Bovine), this protein is Translation initiation factor eIF2B subunit alpha (EIF2B1).